Reading from the N-terminus, the 402-residue chain is UDP-N-acetylmuramoylalanine--D-glutamate ligase (402 aa).

Residue 97 to 103 (GTNGKTT) coordinates ATP.

The protein belongs to the MurCDEF family.

The protein resides in the cytoplasm. It catalyses the reaction UDP-N-acetyl-alpha-D-muramoyl-L-alanine + D-glutamate + ATP = UDP-N-acetyl-alpha-D-muramoyl-L-alanyl-D-glutamate + ADP + phosphate + H(+). It functions in the pathway cell wall biogenesis; peptidoglycan biosynthesis. Cell wall formation. Catalyzes the addition of glutamate to the nucleotide precursor UDP-N-acetylmuramoyl-L-alanine (UMA). The sequence is that of UDP-N-acetylmuramoylalanine--D-glutamate ligase from Campylobacter jejuni subsp. jejuni serotype O:6 (strain 81116 / NCTC 11828).